Reading from the N-terminus, the 197-residue chain is tRNA(Phe) 7-((3-amino-3-carboxypropyl)-4-demethylwyosine(37)-N(4))-methyltransferase (197 aa).

The protein belongs to the TYW3 family.

The enzyme catalyses 4-demethyl-7-[(3S)-3-amino-3-carboxypropyl]wyosine(37) in tRNA(Phe) + S-adenosyl-L-methionine = 7-[(3S)-3-amino-3-carboxypropyl]wyosine(37) in tRNA(Phe) + S-adenosyl-L-homocysteine + H(+). In terms of biological role, S-adenosyl-L-methionine-dependent methyltransferase that acts as a component of the wyosine derivatives biosynthesis pathway. Probably methylates N-4 position of wybutosine-86 to produce wybutosine-72. The sequence is that of tRNA(Phe) 7-((3-amino-3-carboxypropyl)-4-demethylwyosine(37)-N(4))-methyltransferase from Thermococcus sibiricus (strain DSM 12597 / MM 739).